Consider the following 882-residue polypeptide: Pentatricopeptide repeat-containing protein At3g03580 (882 aa).

20 PPR repeats span residues 3-37 (TRVSSPFISRALSSSSNLNELRRIHALVISLGLDS), 38-68 (SDFFSGKLIDKYSHFREPASSLSVFRRVSPA), 70-104 (NVYLWNSIIRAFSKNGLFPEALEFYGKLRESKVSP), 105-139 (DKYTFPSVIKACAGLFDAEMGDLVYEQILDMGFES), 140-170 (DLFVGNALVDMYSRMGLLTRARQVFDEMPVR), 171-205 (DLVSWNSLISGYSSHGYYEEALEIYHELKNSWIVP), 206-240 (DSFTVSSVLPAFGNLLVVKQGQGLHGFALKSGVNS), 241-271 (VVVVNNGLVAMYLKFRRPTDARRVFDEMDVR), 272-307 (DSVSYNTMICGYLKLEMVEESVRMFLENLDQFKPDL), 309-340 (TVSSVLRACGHLRDLSLAKYIYNYMLKAGFVL), 341-371 (ESTVRNILIDVYAKCGDMITARDVFNSMECK), 372-406 (DTVSWNSIISGYIQSGDLMEAMKLFKMMMIMEEQA), 407-441 (DHITYLMLISVSTRLADLKFGKGLHSNGIKSGICI), 442-472 (DLSVSNALIDMYAKCGEVGDSLKIFSSMGTG), 473-507 (DTVTWNTVISACVRFGDFATGLQVTTQMRKSEVVP), 508-542 (DMATFLVTLPMCASLAAKRLGKEIHCCLLRFGYES), 543-573 (ELQIGNALIEMYSKCGCLENSSRVFERMSRR), 574-608 (DVVTWTGMIYAYGMYGEGEKALETFADMEKSGIVP), 609-639 (DSVVFIAIIYACSHSGLVDEGLACFEKMKTH), and 645-675 (MIEHYACVVDLLSRSQKISKAEEFIQAMPIK). The segment at 680–755 (IWASVLRACR…NPGYSWIEVG (76 aa)) is type E motif. Residues 756-786 (KNVHVFSSGDDSAPQSEAIYKSLEILYSLMA) are type E(+) motif. Positions 787 to 882 (KEGYIPDPRE…DGTCSCKDRW (96 aa)) are type DYW motif.

The protein belongs to the PPR family. PCMP-H subfamily.

This is Pentatricopeptide repeat-containing protein At3g03580 (PCMP-H23) from Arabidopsis thaliana (Mouse-ear cress).